The chain runs to 156 residues: ATP synthase subunit b (156 aa).

A helical transmembrane segment spans residues 7-27; that stretch reads LFAQMIVFFVLWWVVARFVWP.

Belongs to the ATPase B chain family. In terms of assembly, F-type ATPases have 2 components, F(1) - the catalytic core - and F(0) - the membrane proton channel. F(1) has five subunits: alpha(3), beta(3), gamma(1), delta(1), epsilon(1). F(0) has three main subunits: a(1), b(2) and c(10-14). The alpha and beta chains form an alternating ring which encloses part of the gamma chain. F(1) is attached to F(0) by a central stalk formed by the gamma and epsilon chains, while a peripheral stalk is formed by the delta and b chains.

Its subcellular location is the cell inner membrane. Functionally, f(1)F(0) ATP synthase produces ATP from ADP in the presence of a proton or sodium gradient. F-type ATPases consist of two structural domains, F(1) containing the extramembraneous catalytic core and F(0) containing the membrane proton channel, linked together by a central stalk and a peripheral stalk. During catalysis, ATP synthesis in the catalytic domain of F(1) is coupled via a rotary mechanism of the central stalk subunits to proton translocation. Component of the F(0) channel, it forms part of the peripheral stalk, linking F(1) to F(0). The polypeptide is ATP synthase subunit b (Polynucleobacter necessarius subsp. necessarius (strain STIR1)).